Here is a 976-residue protein sequence, read N- to C-terminus: Leucine--tRNA ligase (976 aa).

The 'HIGH' region signature appears at 63 to 74 (PYPSGVGLHVGH). The 'KMSKS' region signature appears at 745 to 749 (KMGKS). Residue K748 participates in ATP binding.

This sequence belongs to the class-I aminoacyl-tRNA synthetase family.

It localises to the cytoplasm. It catalyses the reaction tRNA(Leu) + L-leucine + ATP = L-leucyl-tRNA(Leu) + AMP + diphosphate. The polypeptide is Leucine--tRNA ligase (Corynebacterium jeikeium (strain K411)).